Reading from the N-terminus, the 124-residue chain is Small ribosomal subunit protein uS12 (124 aa).

Asp89 is subject to 3-methylthioaspartic acid.

Belongs to the universal ribosomal protein uS12 family. As to quaternary structure, part of the 30S ribosomal subunit. Contacts proteins S8 and S17. May interact with IF1 in the 30S initiation complex.

With S4 and S5 plays an important role in translational accuracy. Functionally, interacts with and stabilizes bases of the 16S rRNA that are involved in tRNA selection in the A site and with the mRNA backbone. Located at the interface of the 30S and 50S subunits, it traverses the body of the 30S subunit contacting proteins on the other side and probably holding the rRNA structure together. The combined cluster of proteins S8, S12 and S17 appears to hold together the shoulder and platform of the 30S subunit. This Vibrio campbellii (strain ATCC BAA-1116) protein is Small ribosomal subunit protein uS12.